A 464-amino-acid polypeptide reads, in one-letter code: uncharacterized protein (464 aa).

2 disordered regions span residues 290-374 and 445-464; these read YRKQ…ERPK and ETDD…PLEE. Residues 293-302 are compositionally biased toward low complexity; sequence QQQWQQQQQQ. Residues 303 to 318 are compositionally biased toward basic residues; it reads RKVKTPIKKQEAKKKA. Positions 352–367 are enriched in polar residues; that stretch reads DMKQQQQMEKGTTSKQ. Residues 445 to 454 show a composition bias toward acidic residues; it reads ETDDEDEENQ.

This is an uncharacterized protein from Macaca fascicularis (Crab-eating macaque).